Consider the following 624-residue polypeptide: Ubiquitin carboxyl-terminal hydrolase 16 (624 aa).

The region spanning 46–620 is the USP domain; it reads VGLSNPANDC…EVYLLFYEIE (575 aa). C55 functions as the Nucleophile in the catalytic mechanism. Residue H424 is the Proton acceptor of the active site. Positions 453 to 573 are disordered; that stretch reads SENPSRVASP…ATDTEASASA (121 aa). Low complexity predominate over residues 479-496; that stretch reads SPPASTSTNSPLSLTPDS. Polar residues predominate over residues 518–544; that stretch reads VSFQSTHSSSKQTISPTSAARNSSSLD. Over residues 546–573 the composition is skewed to low complexity; the sequence is ARLSSPASRSSLAERNASATDTEASASA.

This sequence belongs to the peptidase C19 family.

The catalysed reaction is Thiol-dependent hydrolysis of ester, thioester, amide, peptide and isopeptide bonds formed by the C-terminal Gly of ubiquitin (a 76-residue protein attached to proteins as an intracellular targeting signal).. This chain is Ubiquitin carboxyl-terminal hydrolase 16 (ubp16), found in Emericella nidulans (strain FGSC A4 / ATCC 38163 / CBS 112.46 / NRRL 194 / M139) (Aspergillus nidulans).